We begin with the raw amino-acid sequence, 604 residues long: Protein glass (604 aa).

Disordered stretches follow at residues 111–139 (ISTT…HGYW), 199–237 (NSHN…GGNN), 359–400 (LPPL…SPTS), and 414–434 (EDEE…GGEM). Composition is skewed to low complexity over residues 117 to 126 (ASSGNGSSNN) and 200 to 237 (SHNH…GGNN). The segment covering 414-427 (EDEEDSNEDLDGDE) has biased composition (acidic residues). 5 consecutive C2H2-type zinc fingers follow at residues 437-459 (NLCR…LRTH), 465-487 (YRCP…VRTH), 493-515 (FRCP…MRTH), 521-543 (YRCS…LRIH), and 549-571 (YQCK…MRVH). The disordered stretch occupies residues 566 to 604 (RHMRVHGNNNSSNGSNGATGVGGESSTGSGVGGGNSLLT). The span at 572 to 581 (GNNNSSNGSN) shows a compositional bias: low complexity. Over residues 582-604 (GATGVGGESSTGSGVGGGNSLLT) the composition is skewed to gly residues.

The protein resides in the nucleus. In terms of biological role, transcription factor required for gene expression specific to photoreceptor cells. This is Protein glass (gl) from Drosophila melanogaster (Fruit fly).